The chain runs to 177 residues: Interleukin-10 (177 aa).

The signal sequence occupies residues 1-19; sequence MPSSSAVLCCLVFLAGVAA. Intrachain disulfides connect Cys31–Cys127 and Cys81–Cys133. Asn135 is a glycosylation site (N-linked (GlcNAc...) asparagine).

Belongs to the IL-10 family. As to quaternary structure, homodimer. Interacts with IL10RA and IL10RB.

It localises to the secreted. Major immune regulatory cytokine that acts on many cells of the immune system where it has profound anti-inflammatory functions, limiting excessive tissue disruption caused by inflammation. Mechanistically, IL10 binds to its heterotetrameric receptor comprising IL10RA and IL10RB leading to JAK1 and STAT2-mediated phosphorylation of STAT3. In turn, STAT3 translocates to the nucleus where it drives expression of anti-inflammatory mediators. Targets antigen-presenting cells (APCs) such as macrophages and monocytes and inhibits their release of pro-inflammatory cytokines including granulocyte-macrophage colony-stimulating factor /GM-CSF, granulocyte colony-stimulating factor/G-CSF, IL-1 alpha, IL-1 beta, IL-6, IL-8 and TNF-alpha. Also interferes with antigen presentation by reducing the expression of MHC-class II and co-stimulatory molecules, thereby inhibiting their ability to induce T cell activation. In addition, controls the inflammatory response of macrophages by reprogramming essential metabolic pathways including mTOR signaling. The protein is Interleukin-10 (IL10) of Ovis aries (Sheep).